A 451-amino-acid polypeptide reads, in one-letter code: Phosphoglucosamine mutase (451 aa).

Ser-101 functions as the Phosphoserine intermediate in the catalytic mechanism. Ser-101, Asp-240, Asp-242, and Asp-244 together coordinate Mg(2+). Ser-101 carries the post-translational modification Phosphoserine.

Belongs to the phosphohexose mutase family. Requires Mg(2+) as cofactor. Activated by phosphorylation.

It carries out the reaction alpha-D-glucosamine 1-phosphate = D-glucosamine 6-phosphate. Functionally, catalyzes the conversion of glucosamine-6-phosphate to glucosamine-1-phosphate. The chain is Phosphoglucosamine mutase from Streptococcus pyogenes serotype M1.